Consider the following 63-residue polypeptide: Large ribosomal subunit protein bL28 (63 aa).

The protein belongs to the bacterial ribosomal protein bL28 family.

The sequence is that of Large ribosomal subunit protein bL28 from Coprothermobacter proteolyticus (strain ATCC 35245 / DSM 5265 / OCM 4 / BT).